A 329-amino-acid polypeptide reads, in one-letter code: Phospho-N-acetylmuramoyl-pentapeptide-transferase (329 aa).

Transmembrane regions (helical) follow at residues 1-21, 53-73, 76-96, 109-129, 141-161, 175-195, 198-218, 237-257, and 309-329; these read MLLN…IGIP, MGGF…ALVF, FSPA…IGFL, GLTA…SYFI, ILSW…IWLV, GLAS…AVVH, YDVL…FVFN, FLAI…IGAV, and IVFW…YFAF.

This sequence belongs to the glycosyltransferase 4 family. MraY subfamily. Mg(2+) is required as a cofactor.

Its subcellular location is the cell membrane. It catalyses the reaction UDP-N-acetyl-alpha-D-muramoyl-L-alanyl-gamma-D-glutamyl-L-lysyl-D-alanyl-D-alanine + di-trans,octa-cis-undecaprenyl phosphate = Mur2Ac(oyl-L-Ala-gamma-D-Glu-L-Lys-D-Ala-D-Ala)-di-trans,octa-cis-undecaprenyl diphosphate + UMP. It participates in cell wall biogenesis; peptidoglycan biosynthesis. Functionally, catalyzes the initial step of the lipid cycle reactions in the biosynthesis of the cell wall peptidoglycan: transfers peptidoglycan precursor phospho-MurNAc-pentapeptide from UDP-MurNAc-pentapeptide onto the lipid carrier undecaprenyl phosphate, yielding undecaprenyl-pyrophosphoryl-MurNAc-pentapeptide, known as lipid I. The protein is Phospho-N-acetylmuramoyl-pentapeptide-transferase of Lactococcus lactis subsp. cremoris (strain MG1363).